The following is a 212-amino-acid chain: Thylakoid membrane protein slr1949 (212 aa).

A helical membrane pass occupies residues 109–131; sequence WVQDGLLLLLALGLCGISGYRLW. Positions 180–212 form a coiled coil; the sequence is PNRRQRKQYETRLQALRQSAAKMKAKTQKAKAL.

The protein resides in the cellular thylakoid membrane. The polypeptide is Thylakoid membrane protein slr1949 (Synechocystis sp. (strain ATCC 27184 / PCC 6803 / Kazusa)).